We begin with the raw amino-acid sequence, 117 residues long: Large ribosomal subunit protein uL18 (117 aa).

It belongs to the universal ribosomal protein uL18 family. Part of the 50S ribosomal subunit; part of the 5S rRNA/L5/L18/L25 subcomplex. Contacts the 5S and 23S rRNAs.

Its function is as follows. This is one of the proteins that bind and probably mediate the attachment of the 5S RNA into the large ribosomal subunit, where it forms part of the central protuberance. The polypeptide is Large ribosomal subunit protein uL18 (Onion yellows phytoplasma (strain OY-M)).